The following is a 476-amino-acid chain: Glycogen synthase (476 aa).

Position 15 (lysine 15) interacts with ADP-alpha-D-glucose.

Belongs to the glycosyltransferase 1 family. Bacterial/plant glycogen synthase subfamily.

It carries out the reaction [(1-&gt;4)-alpha-D-glucosyl](n) + ADP-alpha-D-glucose = [(1-&gt;4)-alpha-D-glucosyl](n+1) + ADP + H(+). It functions in the pathway glycan biosynthesis; glycogen biosynthesis. Functionally, synthesizes alpha-1,4-glucan chains using ADP-glucose. This chain is Glycogen synthase, found in Haemophilus influenzae (strain 86-028NP).